The sequence spans 390 residues: Putative nickel insertion protein (390 aa).

It belongs to the LarC family.

In Geotalea uraniireducens (strain Rf4) (Geobacter uraniireducens), this protein is Putative nickel insertion protein.